The primary structure comprises 434 residues: Eukaryotic translation initiation factor 3 subunit E (434 aa).

A PCI domain is found at 219 to 392 (FFNHPKGRDL…GHVVMGTQPL (174 aa)).

It belongs to the eIF-3 subunit E family. As to quaternary structure, component of the eukaryotic translation initiation factor 3 (eIF-3) complex. The eIF-3 complex interacts with pix. Interacts with mxt.

The protein localises to the cytoplasm. Functionally, component of the eukaryotic translation initiation factor 3 (eIF-3) complex, which is involved in protein synthesis of a specialized repertoire of mRNAs and, together with other initiation factors, stimulates binding of mRNA and methionyl-tRNAi to the 40S ribosome. The eIF-3 complex specifically targets and initiates translation of a subset of mRNAs involved in cell proliferation. This chain is Eukaryotic translation initiation factor 3 subunit E (eIF3-S6), found in Drosophila grimshawi (Hawaiian fruit fly).